Reading from the N-terminus, the 434-residue chain is Tubulin gamma chain (434 aa).

Residue 135 to 141 (AGGTGSG) coordinates GTP.

This sequence belongs to the tubulin family.

The protein localises to the cytoplasm. It localises to the cytoskeleton. Its subcellular location is the microtubule organizing center. The protein resides in the spindle pole body. Functionally, tubulin is the major constituent of microtubules. The gamma chain is found at microtubule organizing centers (MTOC) such as the spindle poles or the centrosome, suggesting that it is involved in the minus-end nucleation of microtubule assembly. The protein is Tubulin gamma chain (TUB4) of Encephalitozoon cuniculi (strain GB-M1) (Microsporidian parasite).